The chain runs to 474 residues: MTIFERSKKGRKAFRLPESDIPEYSLPDRFLRRTPPELPEVSEPDLVRHYTNLARKNYSVDLGIYPLGSCTMKYNPKLNEKAANLEGFREIHPYQPVETVQGSLRLMYELKKMLCEITGMDDMTLQPAAGAHGELTGMLIVREYFKNRGDTGRKKVLVPDSAHGTNPASASMVGFEVVEIKSKNGMVDVEDLKKLLDEEVAAVMLTNPNTLGLFEKDILKIAEMTHECGALLYYDGANLNAIMGKVRPGDMGFDIVHLNLHKTFSTPHGMGGPGSGPVGVKKHLVDFLPFPQVKKNGELYELFVPEKTIGRVRSFFGNFPVLVKAYTYILTMGRDGLERVSEMAVLNANYLKKKIEKFLEIPYNGFCMHEFVASAEKVFRETGVRTLDIAKRILDFGVHPPTVYFPLIVPEALMIEPTETENKETLDKYAEILERVVKEAYENPDALKNAPHNTPVRRVNEVLASKKPVFRWRG.

At lysine 262 the chain carries N6-(pyridoxal phosphate)lysine.

Belongs to the GcvP family. C-terminal subunit subfamily. The glycine cleavage system is composed of four proteins: P, T, L and H. In this organism, the P 'protein' is a heterodimer of two subunits. Requires pyridoxal 5'-phosphate as cofactor.

The enzyme catalyses N(6)-[(R)-lipoyl]-L-lysyl-[glycine-cleavage complex H protein] + glycine + H(+) = N(6)-[(R)-S(8)-aminomethyldihydrolipoyl]-L-lysyl-[glycine-cleavage complex H protein] + CO2. Functionally, the glycine cleavage system catalyzes the degradation of glycine. The P protein binds the alpha-amino group of glycine through its pyridoxal phosphate cofactor; CO(2) is released and the remaining methylamine moiety is then transferred to the lipoamide cofactor of the H protein. This Thermotoga maritima (strain ATCC 43589 / DSM 3109 / JCM 10099 / NBRC 100826 / MSB8) protein is Probable glycine dehydrogenase (decarboxylating) subunit 2.